A 188-amino-acid polypeptide reads, in one-letter code: Probable nicotinate-nucleotide adenylyltransferase (188 aa).

This sequence belongs to the NadD family.

It carries out the reaction nicotinate beta-D-ribonucleotide + ATP + H(+) = deamido-NAD(+) + diphosphate. It participates in cofactor biosynthesis; NAD(+) biosynthesis; deamido-NAD(+) from nicotinate D-ribonucleotide: step 1/1. In terms of biological role, catalyzes the reversible adenylation of nicotinate mononucleotide (NaMN) to nicotinic acid adenine dinucleotide (NaAD). The chain is Probable nicotinate-nucleotide adenylyltransferase from Solibacter usitatus (strain Ellin6076).